The sequence spans 704 residues: Neutral ceramidase (704 aa).

The first 23 residues, 1-23 (MAISKIAFLALIALSGLCGLASA), serve as a signal peptide directing secretion. Residue asparagine 230 is glycosylated (N-linked (GlcNAc...) asparagine). The active-site Nucleophile is the serine 276. Asparagine 362, asparagine 550, and asparagine 598 each carry an N-linked (GlcNAc...) asparagine glycan.

The protein belongs to the neutral ceramidase family. In terms of processing, N-glycosylated.

Its subcellular location is the secreted. It catalyses the reaction an N-acylsphing-4-enine + H2O = sphing-4-enine + a fatty acid. In terms of biological role, hydrolyzes the sphingolipid ceramide into sphingosine and free fatty acid at an optimal pH of 6.5-7.5. Acts as a key regulator of sphingolipid signaling metabolites by generating sphingosine at the cell surface. In Drosophila pseudoobscura pseudoobscura (Fruit fly), this protein is Neutral ceramidase (CDase).